We begin with the raw amino-acid sequence, 367 residues long: Alanine racemase (367 aa).

K35 serves as the catalytic Proton acceptor; specific for D-alanine. Residue K35 is modified to N6-(pyridoxal phosphate)lysine. Residue R130 coordinates substrate. Y258 functions as the Proton acceptor; specific for L-alanine in the catalytic mechanism. M306 contributes to the substrate binding site.

This sequence belongs to the alanine racemase family. Requires pyridoxal 5'-phosphate as cofactor.

The enzyme catalyses L-alanine = D-alanine. It participates in amino-acid biosynthesis; D-alanine biosynthesis; D-alanine from L-alanine: step 1/1. Functionally, catalyzes the interconversion of L-alanine and D-alanine. May also act on other amino acids. This is Alanine racemase (alr) from Acinetobacter baumannii (strain SDF).